Here is a 540-residue protein sequence, read N- to C-terminus: Chaperonin GroEL (540 aa).

ATP is bound by residues 29–32 (TIGP), 86–90 (DGTTT), G413, 476–478 (NAA), and D492. Positions 520-540 (DKPEPESNNQMPATPGMGGMM) are disordered.

Belongs to the chaperonin (HSP60) family. Forms a cylinder of 14 subunits composed of two heptameric rings stacked back-to-back. Interacts with the co-chaperonin GroES.

Its subcellular location is the cytoplasm. It carries out the reaction ATP + H2O + a folded polypeptide = ADP + phosphate + an unfolded polypeptide.. In terms of biological role, together with its co-chaperonin GroES, plays an essential role in assisting protein folding. The GroEL-GroES system forms a nano-cage that allows encapsulation of the non-native substrate proteins and provides a physical environment optimized to promote and accelerate protein folding. This is Chaperonin GroEL from Ligilactobacillus salivarius (strain UCC118) (Lactobacillus salivarius).